Here is a 507-residue protein sequence, read N- to C-terminus: Alkyl hydroperoxide reductase subunit F (507 aa).

FAD is bound at residue 207-222 (DVLIVGGGPASGSAAI). An intrachain disulfide couples Cys-335 to Cys-338. 347–361 (DVAVIGGGNSGVEAA) contacts NAD(+). Residue 467 to 477 (TNVPGIFAAGD) coordinates FAD.

It belongs to the class-II pyridine nucleotide-disulfide oxidoreductase family. As to quaternary structure, homodimer. FAD is required as a cofactor.

Its function is as follows. Serves to protect the cell against DNA damage by alkyl hydroperoxides. It can use either NADH or NADPH as electron donor for direct reduction of redox dyes or of alkyl hydroperoxides when combined with the AhpC protein. This Staphylococcus aureus (strain Mu50 / ATCC 700699) protein is Alkyl hydroperoxide reductase subunit F (ahpF).